A 258-amino-acid polypeptide reads, in one-letter code: UPF0246 protein NTHI1156 (258 aa).

It belongs to the UPF0246 family.

The sequence is that of UPF0246 protein NTHI1156 from Haemophilus influenzae (strain 86-028NP).